Consider the following 292-residue polypeptide: MIETRTTTSTSEIKHDNSLKTGFEITKEVEEFRNYENSEDRVSEAYRNSHTYQTYDYATEKKKQYSQLDTSIKMGLWEAAELLNTIIDESDPDSNIPQINHCLQTAEAIRKVYPDSKYDWFHLTGFIHDLGKVLLSKKFKEQPQWATVGDTFPLGCKFDESNIFYEFFKMNPDYNDSKYNSECGIYKKNIGLENVTMSWGHDEYFYLVCVGNKCLLPKESLYMIRFHSFYPWHRHNKYTHLTNEEDEKMLNWVKEFNKFDLYSKDSEPVDVESLKPYYQSLISKYFPNELHW.

Residues Arg-33 and 88–90 contribute to the substrate site; that span reads DES. Residues His-101, His-128, and Asp-129 each contribute to the Fe cation site. Residues Lys-132 and 149-150 each bind substrate; that span reads GD. 3 residues coordinate Fe cation: His-201, His-227, and Asp-260. Residue 227–228 coordinates substrate; it reads HS.

The protein belongs to the myo-inositol oxygenase family. Fe cation serves as cofactor.

It localises to the cytoplasm. It catalyses the reaction myo-inositol + O2 = D-glucuronate + H2O + H(+). Its pathway is polyol metabolism; myo-inositol degradation into D-glucuronate; D-glucuronate from myo-inositol: step 1/1. This Dictyostelium discoideum (Social amoeba) protein is Inositol oxygenase (miox).